The chain runs to 490 residues: MSRYGLQKLYINGAYTDSTSGDTFDAVNPANGECIAQLQAANAQDVDKAVAAAKQGQPVWAAMTAMERSRILRRAVDILRDRNDELAAIETADTGKPLSETRSVDIVTGADVLEYYAGLIPALEGQQIPLRGSAFVYTRREPLGVVAGIGAWNYPIQIALWKSAPALAAGNAMIFKPSEVTSLTALKLAEIYTEAGLPAGVFNVLTGSGDQVGQMLTEHPGIAKVSFTGGIASGKKVMANAAGSTLKDVTMELGGKSPLIIFADVDLDKAADIAMMANFYSSGQVCTNGTRVFVPQALQAAFEQKIVERVKRIHIGDPSDERVNFGPLVSFQHRDSVMRYIDSGKREGATLLIGGCSLTEGALAHGAYVAPTVFTHCRDDMQIVREEIFGPVMSILSYQSEEEVIRRANDTEYGLAAGVVTQDLNRAHRVIHQLQAGICWINTWGESAPEMPVGGYKHSGVGRENGISTLEHYTQIKSIQVELGSFNSVF.

Aspartate 93 is a binding site for K(+). 150 to 152 (GAW) is a binding site for NAD(+). Catalysis depends on lysine 162, which acts as the Charge relay system. An NAD(+)-binding site is contributed by 176-179 (KPSE). Valine 180 is a K(+) binding site. Position 230-233 (230-233 (GIAS)) interacts with NAD(+). Leucine 246 lines the K(+) pocket. Glutamate 252 (proton acceptor) is an active-site residue. 3 residues coordinate NAD(+): glycine 254, cysteine 286, and glutamate 387. Cysteine 286 serves as the catalytic Nucleophile. A Cysteine sulfenic acid (-SOH) modification is found at cysteine 286. Lysine 457 and glycine 460 together coordinate K(+). The active-site Charge relay system is glutamate 464.

This sequence belongs to the aldehyde dehydrogenase family. In terms of assembly, dimer of dimers. The cofactor is K(+).

It catalyses the reaction betaine aldehyde + NAD(+) + H2O = glycine betaine + NADH + 2 H(+). It participates in amine and polyamine biosynthesis; betaine biosynthesis via choline pathway; betaine from betaine aldehyde: step 1/1. In terms of biological role, involved in the biosynthesis of the osmoprotectant glycine betaine. Catalyzes the irreversible oxidation of betaine aldehyde to the corresponding acid. This Yersinia pseudotuberculosis serotype O:3 (strain YPIII) protein is Betaine aldehyde dehydrogenase.